The chain runs to 291 residues: Mitochondrial thiamine pyrophosphate carrier 1 (291 aa).

The next 6 helical transmembrane spans lie at 12 to 31 (GATASVYHTLVAGSVSGAVA), 83 to 99 (IMYILYGATQFTSYSMF), 120 to 141 (SLIVGTSAGLTSLIVTYPFDLL), 167 to 191 (GGLAGLYMGAKPTLLSLGLNSGLMF), 214 to 230 (FCGFFAGASSKGITFPL), and 265 to 282 (GFGISLIKTAPTSAVSLF). 3 Solcar repeats span residues 15-102 (ASVY…FSKA), 115-200 (RPSN…AREV), and 207-290 (NIPF…VLNG).

This sequence belongs to the mitochondrial carrier (TC 2.A.29) family.

It localises to the mitochondrion inner membrane. In terms of biological role, mitochondrial transporter that mediates uptake of thiamine pyrophosphate (ThPP) into mitochondria. This Meyerozyma guilliermondii (strain ATCC 6260 / CBS 566 / DSM 6381 / JCM 1539 / NBRC 10279 / NRRL Y-324) (Yeast) protein is Mitochondrial thiamine pyrophosphate carrier 1 (TPC1).